The sequence spans 234 residues: 1-(5-phosphoribosyl)-5-[(5-phosphoribosylamino)methylideneamino] imidazole-4-carboxamide isomerase (234 aa).

D9 (proton acceptor) is an active-site residue. D131 functions as the Proton donor in the catalytic mechanism.

The protein belongs to the HisA/HisF family.

The protein localises to the cytoplasm. It catalyses the reaction 1-(5-phospho-beta-D-ribosyl)-5-[(5-phospho-beta-D-ribosylamino)methylideneamino]imidazole-4-carboxamide = 5-[(5-phospho-1-deoxy-D-ribulos-1-ylimino)methylamino]-1-(5-phospho-beta-D-ribosyl)imidazole-4-carboxamide. Its pathway is amino-acid biosynthesis; L-histidine biosynthesis; L-histidine from 5-phospho-alpha-D-ribose 1-diphosphate: step 4/9. The chain is 1-(5-phosphoribosyl)-5-[(5-phosphoribosylamino)methylideneamino] imidazole-4-carboxamide isomerase from Staphylococcus aureus (strain MRSA252).